The chain runs to 641 residues: Homeobox protein ceh-38 (641 aa).

Composition is skewed to polar residues over residues 1 to 14 (MESSRTAATSTNGT) and 28 to 38 (DPSSTFINNTG). Disordered regions lie at residues 1–79 (MESS…TSSA) and 129–244 (LHVD…GDRM). Positions 52-79 (TISPHPITPSASTSSATSATEEPATSSA) are enriched in low complexity. The segment covering 131-140 (VDSRRRESHD) has biased composition (basic and acidic residues). Polar residues-rich tracts occupy residues 167-183 (TPTNDRSTDLGSISSLL) and 190-204 (NTIGQSPSPRSTFGS). Residues 308–394 (NAEIGDDIYI…TRLAILDMKT (87 aa)) constitute a DNA-binding region (CUT). Disordered regions lie at residues 398–428 (NRASGMSPPTPAQNVRTHRRSTSDHDGPVSK), 485–508 (GGNIDEPTPFQQVKNISPPPVGDT), and 552–641 (FGVS…LAAN). A DNA-binding region (homeobox) is located at residues 427–486 (SKRPRLVFTDIQKRTLQAIFKETQRPSREMQQTIAEHLRLDLSTVANFFMNARRRSRLGG). The span at 571-604 (HEDDEELDELNDSELAYEEDVEIGDEEEEDEEQA) shows a compositional bias: acidic residues. The segment covering 613-626 (KVEELEEKTVIKEE) has biased composition (basic and acidic residues).

It belongs to the CUT homeobox family. In terms of tissue distribution, expressed in the embryo. After gastrulation, expressed in almost all cells. During larval and adult stages, expressed in the dorsal and ventral nerve cord, head and tail neurons, pharynx, gut and head.

It is found in the nucleus. Its function is as follows. Probable DNA-binding regulatory protein involved in cell-fate specification. This chain is Homeobox protein ceh-38 (ceh-38), found in Caenorhabditis elegans.